The primary structure comprises 218 residues: ATP-dependent Clp protease proteolytic subunit 2 (218 aa).

This sequence belongs to the peptidase S14 family. As to quaternary structure, fourteen ClpP subunits assemble into 2 heptameric rings which stack back to back to give a disk-like structure with a central cavity, resembling the structure of eukaryotic proteasomes.

The protein resides in the cytoplasm. The enzyme catalyses Hydrolysis of proteins to small peptides in the presence of ATP and magnesium. alpha-casein is the usual test substrate. In the absence of ATP, only oligopeptides shorter than five residues are hydrolyzed (such as succinyl-Leu-Tyr-|-NHMec, and Leu-Tyr-Leu-|-Tyr-Trp, in which cleavage of the -Tyr-|-Leu- and -Tyr-|-Trp bonds also occurs).. In terms of biological role, cleaves peptides in various proteins in a process that requires ATP hydrolysis. Has a chymotrypsin-like activity. Plays a major role in the degradation of misfolded proteins. The sequence is that of ATP-dependent Clp protease proteolytic subunit 2 from Gloeobacter violaceus (strain ATCC 29082 / PCC 7421).